We begin with the raw amino-acid sequence, 96 residues long: Pyrimidine/purine nucleoside phosphorylase (96 aa).

The protein belongs to the nucleoside phosphorylase PpnP family.

It carries out the reaction a purine D-ribonucleoside + phosphate = a purine nucleobase + alpha-D-ribose 1-phosphate. It catalyses the reaction adenosine + phosphate = alpha-D-ribose 1-phosphate + adenine. The enzyme catalyses cytidine + phosphate = cytosine + alpha-D-ribose 1-phosphate. The catalysed reaction is guanosine + phosphate = alpha-D-ribose 1-phosphate + guanine. It carries out the reaction inosine + phosphate = alpha-D-ribose 1-phosphate + hypoxanthine. It catalyses the reaction thymidine + phosphate = 2-deoxy-alpha-D-ribose 1-phosphate + thymine. The enzyme catalyses uridine + phosphate = alpha-D-ribose 1-phosphate + uracil. The catalysed reaction is xanthosine + phosphate = alpha-D-ribose 1-phosphate + xanthine. Catalyzes the phosphorolysis of diverse nucleosides, yielding D-ribose 1-phosphate and the respective free bases. Can use uridine, adenosine, guanosine, cytidine, thymidine, inosine and xanthosine as substrates. Also catalyzes the reverse reactions. The sequence is that of Pyrimidine/purine nucleoside phosphorylase from Serratia proteamaculans (strain 568).